We begin with the raw amino-acid sequence, 74 residues long: DNA-directed RNA polymerase subunit omega (74 aa).

This sequence belongs to the RNA polymerase subunit omega family. The RNAP catalytic core consists of 2 alpha, 1 beta, 1 beta' and 1 omega subunit. When a sigma factor is associated with the core the holoenzyme is formed, which can initiate transcription.

It catalyses the reaction RNA(n) + a ribonucleoside 5'-triphosphate = RNA(n+1) + diphosphate. Its function is as follows. Promotes RNA polymerase assembly. Latches the N- and C-terminal regions of the beta' subunit thereby facilitating its interaction with the beta and alpha subunits. The chain is DNA-directed RNA polymerase subunit omega from Helicobacter pylori (strain P12).